We begin with the raw amino-acid sequence, 208 residues long: Pyrrolidone-carboxylate peptidase (208 aa).

Residues Glu79, Cys142, and His166 contribute to the active site.

Belongs to the peptidase C15 family. As to quaternary structure, homotetramer made of two disulfide-linked dimers.

The protein resides in the cytoplasm. The catalysed reaction is Release of an N-terminal pyroglutamyl group from a polypeptide, the second amino acid generally not being Pro.. Removes 5-oxoproline from various penultimate amino acid residues except L-proline. This Pyrococcus furiosus (strain ATCC 43587 / DSM 3638 / JCM 8422 / Vc1) protein is Pyrrolidone-carboxylate peptidase (pcp).